We begin with the raw amino-acid sequence, 663 residues long: Fructose-1,6-bisphosphatase class 3 1 (663 aa).

It belongs to the FBPase class 3 family. The cofactor is Mn(2+).

The enzyme catalyses beta-D-fructose 1,6-bisphosphate + H2O = beta-D-fructose 6-phosphate + phosphate. It participates in carbohydrate biosynthesis; gluconeogenesis. The chain is Fructose-1,6-bisphosphatase class 3 1 from Clostridium beijerinckii (strain ATCC 51743 / NCIMB 8052) (Clostridium acetobutylicum).